The primary structure comprises 418 residues: Zinc finger protein 566 (418 aa).

Residues 6–77 (VMFSDVSVDF…DRELTRGQWP (72 aa)) enclose the KRAB domain. A C2H2-type 1; degenerate zinc finger spans residues 169 to 193 (KFCASKEYRKTFRHGSQFATHEIIH). C2H2-type zinc fingers lie at residues 199–221 (YECK…QKIH), 227–249 (FECK…HRIH), 255–277 (YECK…QRIH), 283–305 (YECK…QRIH), 311–333 (YECK…QRIH), 339–361 (YECK…QRIH), and 367–389 (YECK…HRIH). Glycyl lysine isopeptide (Lys-Gly) (interchain with G-Cter in SUMO2) cross-links involve residues Lys314 and Lys328.

The protein belongs to the krueppel C2H2-type zinc-finger protein family.

Its subcellular location is the nucleus. Functionally, may be involved in transcriptional regulation. In Pan troglodytes (Chimpanzee), this protein is Zinc finger protein 566 (ZNF566).